The sequence spans 199 residues: Probable thymidylate kinase (199 aa).

13-20 (GIDGAGKT) is a binding site for ATP.

It belongs to the thymidylate kinase family.

The enzyme catalyses dTMP + ATP = dTDP + ADP. The sequence is that of Probable thymidylate kinase from Staphylothermus marinus (strain ATCC 43588 / DSM 3639 / JCM 9404 / F1).